A 208-amino-acid polypeptide reads, in one-letter code: NAD(P)H-quinone oxidoreductase subunit I (208 aa).

2 4Fe-4S ferredoxin-type domains span residues 55–84 and 95–124; these read GRIH…VDWV and RNYS…MTEE. [4Fe-4S] cluster contacts are provided by C64, C67, C70, C74, C104, C107, C110, and C114.

Belongs to the complex I 23 kDa subunit family. As to quaternary structure, NDH-1 is composed of at least 11 different subunits. The cofactor is [4Fe-4S] cluster.

Its subcellular location is the cellular thylakoid membrane. It carries out the reaction a plastoquinone + NADH + (n+1) H(+)(in) = a plastoquinol + NAD(+) + n H(+)(out). It catalyses the reaction a plastoquinone + NADPH + (n+1) H(+)(in) = a plastoquinol + NADP(+) + n H(+)(out). Its function is as follows. NDH-1 shuttles electrons from an unknown electron donor, via FMN and iron-sulfur (Fe-S) centers, to quinones in the respiratory and/or the photosynthetic chain. The immediate electron acceptor for the enzyme in this species is believed to be plastoquinone. Couples the redox reaction to proton translocation, and thus conserves the redox energy in a proton gradient. In Prochlorococcus marinus (strain MIT 9515), this protein is NAD(P)H-quinone oxidoreductase subunit I.